Reading from the N-terminus, the 199-residue chain is Imidazoleglycerol-phosphate dehydratase (199 aa).

This sequence belongs to the imidazoleglycerol-phosphate dehydratase family.

It is found in the cytoplasm. It catalyses the reaction D-erythro-1-(imidazol-4-yl)glycerol 3-phosphate = 3-(imidazol-4-yl)-2-oxopropyl phosphate + H2O. Its pathway is amino-acid biosynthesis; L-histidine biosynthesis; L-histidine from 5-phospho-alpha-D-ribose 1-diphosphate: step 6/9. The polypeptide is Imidazoleglycerol-phosphate dehydratase (Acidithiobacillus ferrooxidans (strain ATCC 53993 / BNL-5-31) (Leptospirillum ferrooxidans (ATCC 53993))).